The sequence spans 81 residues: MENVLGFVALAAGLIIGLGAIGACIGIGIMGSKYLEASARQPELMNALQTKMFLLAGLIDAAFLIGVGIAMMFAFANPFQL.

The next 2 membrane-spanning stretches (helical) occupy residues 7–27 (FVAL…CIGI) and 53–73 (FLLA…AMMF).

This sequence belongs to the ATPase C chain family. As to quaternary structure, F-type ATPases have 2 components, F(1) - the catalytic core - and F(0) - the membrane proton channel. F(1) has five subunits: alpha(3), beta(3), gamma(1), delta(1), epsilon(1). F(0) has three main subunits: a(1), b(2) and c(10-14). The alpha and beta chains form an alternating ring which encloses part of the gamma chain. F(1) is attached to F(0) by a central stalk formed by the gamma and epsilon chains, while a peripheral stalk is formed by the delta and b chains.

The protein resides in the cell inner membrane. In terms of biological role, f(1)F(0) ATP synthase produces ATP from ADP in the presence of a proton or sodium gradient. F-type ATPases consist of two structural domains, F(1) containing the extramembraneous catalytic core and F(0) containing the membrane proton channel, linked together by a central stalk and a peripheral stalk. During catalysis, ATP synthesis in the catalytic domain of F(1) is coupled via a rotary mechanism of the central stalk subunits to proton translocation. Functionally, key component of the F(0) channel; it plays a direct role in translocation across the membrane. A homomeric c-ring of between 10-14 subunits forms the central stalk rotor element with the F(1) delta and epsilon subunits. This Azoarcus sp. (strain BH72) protein is ATP synthase subunit c.